A 687-amino-acid chain; its full sequence is Macrolide export ATP-binding/permease protein MacB (687 aa).

One can recognise an ABC transporter domain in the interval 6-244 (LKLAAVTRRF…LAEAGVDAAE (239 aa)). 42 to 49 (GASGSGKS) is an ATP binding site. Residues 246 to 256 (AEASEAAVGES) show a composition bias toward low complexity. A disordered region spans residues 246-281 (AEASEAAVGESPTRNRHDTPAPPAAVDTDPHVDTGT). A run of 4 helical transmembrane segments spans residues 312 to 332 (LLTM…VAIG), 560 to 580 (LTLL…IGVM), 617 to 637 (LVCL…GALF), and 650 to 670 (AGAI…FGFM).

It belongs to the ABC transporter superfamily. Macrolide exporter (TC 3.A.1.122) family. As to quaternary structure, homodimer.

The protein resides in the cell inner membrane. In terms of biological role, non-canonical ABC transporter that contains transmembrane domains (TMD), which form a pore in the inner membrane, and an ATP-binding domain (NBD), which is responsible for energy generation. Confers resistance against macrolides. This is Macrolide export ATP-binding/permease protein MacB from Burkholderia lata (strain ATCC 17760 / DSM 23089 / LMG 22485 / NCIMB 9086 / R18194 / 383).